The following is a 242-amino-acid chain: Phosducin-like protein 2 (242 aa).

The 168-residue stretch at 34-201 (VLRLQKEAMV…LEWKLAEVGA (168 aa)) folds into the Phosducin domain. The segment at 89–242 (FGELREISGN…SSNSDSEDTK (154 aa)) is thioredoxin fold.

It belongs to the phosducin family. In terms of assembly, interacts with the CCT chaperonin complex and actin.

It is found in the endoplasmic reticulum. Its function is as follows. Essential for male fertility, spermiogenesis and acrosome formation. The polypeptide is Phosducin-like protein 2 (PDCL2) (Bos taurus (Bovine)).